Reading from the N-terminus, the 643-residue chain is Threonine--tRNA ligase (643 aa).

Positions 1-65 (MIHITLPDGS…NKDMPLSIVT (65 aa)) constitute a TGS domain. Positions 246–537 (DHRKLGRELD…LIEQHAGAMP (292 aa)) are catalytic. Zn(2+)-binding residues include cysteine 337, histidine 388, and histidine 514.

Belongs to the class-II aminoacyl-tRNA synthetase family. Homodimer. Requires Zn(2+) as cofactor.

It is found in the cytoplasm. It carries out the reaction tRNA(Thr) + L-threonine + ATP = L-threonyl-tRNA(Thr) + AMP + diphosphate + H(+). Its function is as follows. Catalyzes the attachment of threonine to tRNA(Thr) in a two-step reaction: L-threonine is first activated by ATP to form Thr-AMP and then transferred to the acceptor end of tRNA(Thr). Also edits incorrectly charged L-seryl-tRNA(Thr). The protein is Threonine--tRNA ligase of Delftia acidovorans (strain DSM 14801 / SPH-1).